Here is a 461-residue protein sequence, read N- to C-terminus: MNDNKAWSGRFAEPVAELVKTYTASVDFDRRMAEFDIQGSLAHAQMLTRAGVLSETDLDAIRSGMHTILEDIRAGRFEWSVDLEDVHMNVEKRLTDRIGDAGKRLHTGRSRNDQVATGIRLYLRDAIDRIVGFVRGLQAALLDLAEPNAATVMPGFTHLQVAQPVTFGHHLLAYVEMLGRDAERMQDCRKRVNRLPLGAAALAGTTYPIDRHYTAELLGFDDVCHNSLDAVSDRDFAIEFTAAASLVMTHLSRLSEELILWMSPRVGFIDIADRFCTGSSIMPQKKNPDVPELVRGKAGRVTGHLMALLMLMKAQPLAYNKDNQEDKEPLFDTVDTLIDTLRIYADMMRGITVRPEAMRAAVLQGFATATDLADYLVKKGVPFRDSHEIVARTVKLAEVQGCDIADLPLDELREFSELIEADVYDVLTPEGSLAQRNHVGGTAPEQVREQIARWRQRLAHA.

It belongs to the lyase 1 family. Argininosuccinate lyase subfamily.

It is found in the cytoplasm. It carries out the reaction 2-(N(omega)-L-arginino)succinate = fumarate + L-arginine. It functions in the pathway amino-acid biosynthesis; L-arginine biosynthesis; L-arginine from L-ornithine and carbamoyl phosphate: step 3/3. The polypeptide is Argininosuccinate lyase (Laribacter hongkongensis (strain HLHK9)).